Reading from the N-terminus, the 900-residue chain is Probable 2-oxoadipate dehydrogenase complex component E1 homolog (900 aa).

Belongs to the alpha-ketoglutarate dehydrogenase family. Requires thiamine diphosphate as cofactor.

It is found in the mitochondrion. It catalyses the reaction N(6)-[(R)-lipoyl]-L-lysyl-[protein] + 2-oxoadipate + H(+) = N(6)-[(R)-S(8)-glutaryldihydrolipoyl]-L-lysyl-[protein] + CO2. In terms of biological role, 2-oxoadipate dehydrogenase (E1a) component of the 2-oxoadipate dehydrogenase complex (OADHC). Participates in the first step, rate limiting for the overall conversion of 2-oxoadipate (alpha-ketoadipate) to glutaryl-CoA and CO(2) catalyzed by the whole OADHC. Catalyzes the irreversible decarboxylation of 2-oxoadipate via the thiamine diphosphate (ThDP) cofactor and subsequent transfer of the decarboxylated acyl intermediate on an oxidized dihydrolipoyl group that is covalently amidated to the E2 enzyme (dihydrolipoyllysine-residue succinyltransferase or DLST). The chain is Probable 2-oxoadipate dehydrogenase complex component E1 homolog (odhA) from Dictyostelium discoideum (Social amoeba).